A 61-amino-acid chain; its full sequence is Photosystem II reaction center protein K (61 aa).

Positions 1 to 24 are excised as a propeptide; that stretch reads MLNTFSLIGICLNSTLYSSSFFFG. Residues 36–56 form a helical membrane-spanning segment; sequence IVDIMPVIPLFFFLLAFVWQA.

It belongs to the PsbK family. PSII is composed of 1 copy each of membrane proteins PsbA, PsbB, PsbC, PsbD, PsbE, PsbF, PsbH, PsbI, PsbJ, PsbK, PsbL, PsbM, PsbT, PsbX, PsbY, PsbZ, Psb30/Ycf12, at least 3 peripheral proteins of the oxygen-evolving complex and a large number of cofactors. It forms dimeric complexes.

The protein resides in the plastid. Its subcellular location is the chloroplast thylakoid membrane. Functionally, one of the components of the core complex of photosystem II (PSII). PSII is a light-driven water:plastoquinone oxidoreductase that uses light energy to abstract electrons from H(2)O, generating O(2) and a proton gradient subsequently used for ATP formation. It consists of a core antenna complex that captures photons, and an electron transfer chain that converts photonic excitation into a charge separation. This Solanum bulbocastanum (Wild potato) protein is Photosystem II reaction center protein K.